The following is a 507-amino-acid chain: Transmembrane protein 184 homolog DDB_G0276041 (507 aa).

The next 7 membrane-spanning stretches (helical) occupy residues 13–33 (IVML…AVIL), 50–70 (IVRI…SLFF), 88–108 (AYVL…EEAL), 141–161 (LGLV…AAIL), 179–199 (LWIT…LVMF), 222–242 (VVFF…FDAL), and 260–280 (FLVC…FSYS). N-linked (GlcNAc...) asparagine glycosylation is found at asparagine 360, asparagine 375, asparagine 470, asparagine 473, asparagine 477, and asparagine 498. The segment at 448-500 (NGASNNNNNNNNNNNNINNNNNNNSNNSNNNSNSQFESIDINSNSVNSNKNQS) is disordered. Over residues 451–500 (SNNNNNNNNNNNNINNNNNNNSNNSNNNSNSQFESIDINSNSVNSNKNQS) the composition is skewed to low complexity.

It belongs to the TMEM184 family.

Its subcellular location is the cell membrane. Functionally, probable transporter. In Dictyostelium discoideum (Social amoeba), this protein is Transmembrane protein 184 homolog DDB_G0276041 (tmem184B).